We begin with the raw amino-acid sequence, 340 residues long: MVEQIKDKLGRPIRDLRLSVTDRCNFRCDYCMPKEVFGDDFVFLPKNELLTFDEMARIAKVYAELGVKKIRITGGEPLMRRDLDVLIAKLNQIDGIEDIGLTTNGLLLKKHGQKLYDAGLRRINVSLDAIDDTLFQSINNRNIKATTILEQIDYATSIGLNVKVNVVIQKGINDDQIIPMLEYFKDKHIEIRFIEFMDVGNDNGWDFSKVVTKDEMLTMIEQHFEIDPVEPKYFGEVAKYYRHKDNGVQFGLITSVSQSFCSTCTRARLSSDGKFYGCLFATADGFNVKAFIRSGVTDEELKEQFKALWQIRDDRYSDERTAQTVANRQRKKINMNYIGG.

The Radical SAM core domain occupies 8-227; sequence KLGRPIRDLR…TMIEQHFEID (220 aa). Position 17 (arginine 17) interacts with GTP. Positions 24 and 28 each coordinate [4Fe-4S] cluster. Tyrosine 30 provides a ligand contact to S-adenosyl-L-methionine. Cysteine 31 contributes to the [4Fe-4S] cluster binding site. A GTP-binding site is contributed by arginine 71. Residue glycine 75 coordinates S-adenosyl-L-methionine. Threonine 102 contacts GTP. Position 126 (serine 126) interacts with S-adenosyl-L-methionine. Lysine 163 is a binding site for GTP. An S-adenosyl-L-methionine-binding site is contributed by methionine 197. [4Fe-4S] cluster is bound by residues cysteine 261 and cysteine 264. A GTP-binding site is contributed by 266–268; it reads RAR. Residue cysteine 278 participates in [4Fe-4S] cluster binding.

This sequence belongs to the radical SAM superfamily. MoaA family. In terms of assembly, monomer and homodimer. The cofactor is [4Fe-4S] cluster.

It carries out the reaction GTP + AH2 + S-adenosyl-L-methionine = (8S)-3',8-cyclo-7,8-dihydroguanosine 5'-triphosphate + 5'-deoxyadenosine + L-methionine + A + H(+). It participates in cofactor biosynthesis; molybdopterin biosynthesis. Functionally, catalyzes the cyclization of GTP to (8S)-3',8-cyclo-7,8-dihydroguanosine 5'-triphosphate. In Staphylococcus aureus (strain MRSA252), this protein is GTP 3',8-cyclase.